A 177-amino-acid chain; its full sequence is Voltage-dependent L-type calcium channel subunit alpha-1C (177 aa).

A helical membrane pass occupies residues 27-45; that stretch reads ITFFRLFRVMRLVKLLSRG. A helical transmembrane segment spans residues 64–84; it reads YVALLIVMLFFIYAVIGMQVF. An N-linked (GlcNAc...) asparagine glycan is attached at N90. Positions 107–125 form an intramembrane region, pore-forming; that stretch reads AVLLLFRCATGEAWQEIML. Positions 116–119 match the Selectivity filter of repeat IV motif; that stretch reads TGEA. A disulfide bridge links C133 with C149. A glycan (N-linked (GlcNAc...) asparagine) is linked at N141. A helical membrane pass occupies residues 154 to 177; it reads AVFYFISFYMLCAFLIIDLFVAVI.

This sequence belongs to the calcium channel alpha-1 subunit (TC 1.A.1.11) family. CACNA1C subfamily. In terms of assembly, component of a calcium channel complex consisting of a pore-forming alpha subunit (CACNA1C) and ancillary beta, gamma and delta subunits. The channel complex contains alpha, beta, gamma and delta subunits in a 1:1:1:1 ratio, i.e. it contains only one of each type of subunit. CACNA1C channel activity is modulated by ancillary subunits, such as CACNB2, CACNB3, CACNA2D1 and CACNA2D4. In terms of processing, phosphorylation by PKA activates the channel.

It is found in the cell membrane. Its subcellular location is the perikaryon. The protein resides in the postsynaptic density membrane. The protein localises to the cell projection. It localises to the dendrite. It is found in the sarcolemma. Its subcellular location is the T-tubule. It catalyses the reaction Ca(2+)(in) = Ca(2+)(out). Its activity is regulated as follows. Inhibited by dihydropyridines (DHP), such as isradipine. Channel activity is regulated by Ca(2+) and calmodulin. In terms of biological role, pore-forming, alpha-1C subunit of the voltage-gated calcium channel that gives rise to L-type calcium currents. Mediates influx of calcium ions into the cytoplasm, and thereby triggers calcium release from the sarcoplasm. Plays an important role in excitation-contraction coupling in the heart. Required for normal heart development and normal regulation of heart rhythm. Required for normal contraction of smooth muscle cells in blood vessels and in the intestine. Essential for normal blood pressure regulation via its role in the contraction of arterial smooth muscle cells. Long-lasting (L-type) calcium channels belong to the 'high-voltage activated' (HVA) group. The sequence is that of Voltage-dependent L-type calcium channel subunit alpha-1C (CACNA1C) from Gallus gallus (Chicken).